The sequence spans 234 residues: Adenosine 5'-phosphosulfate reductase (234 aa).

4 residues coordinate [4Fe-4S] cluster: C120, C121, C203, and C206. C229 acts as the Nucleophile; cysteine thiosulfonate intermediate in catalysis.

Belongs to the PAPS reductase family. CysH subfamily. [4Fe-4S] cluster is required as a cofactor.

It is found in the cytoplasm. It catalyses the reaction [thioredoxin]-disulfide + sulfite + AMP + 2 H(+) = adenosine 5'-phosphosulfate + [thioredoxin]-dithiol. Its pathway is sulfur metabolism; hydrogen sulfide biosynthesis; sulfite from sulfate. Catalyzes the formation of sulfite from adenosine 5'-phosphosulfate (APS) using thioredoxin as an electron donor. In Bacillus cereus (strain ATCC 14579 / DSM 31 / CCUG 7414 / JCM 2152 / NBRC 15305 / NCIMB 9373 / NCTC 2599 / NRRL B-3711), this protein is Adenosine 5'-phosphosulfate reductase.